A 468-amino-acid chain; its full sequence is Ammonium transporter Amt2 (468 aa).

The next 12 membrane-spanning stretches (helical) occupy residues M1–A21, F39–L59, L77–G97, L123–A143, A156–L176, F194–L214, L236–G256, I268–T288, V297–W317, W321–L341, V350–F370, and L400–I420.

This sequence belongs to the ammonia transporter channel (TC 1.A.11.2) family. Homotrimer.

It is found in the cell membrane. Functionally, involved in the uptake of ammonium/ammonia (NH(4)(+)/NH(3)). Transport is electrogenic. The chain is Ammonium transporter Amt2 from Archaeoglobus fulgidus (strain ATCC 49558 / DSM 4304 / JCM 9628 / NBRC 100126 / VC-16).